We begin with the raw amino-acid sequence, 354 residues long: Peptide chain release factor 1 (354 aa).

Glutamine 230 carries the N5-methylglutamine modification.

It belongs to the prokaryotic/mitochondrial release factor family. In terms of processing, methylated by PrmC. Methylation increases the termination efficiency of RF1.

The protein localises to the cytoplasm. Peptide chain release factor 1 directs the termination of translation in response to the peptide chain termination codons UAG and UAA. The sequence is that of Peptide chain release factor 1 from Pelobacter propionicus (strain DSM 2379 / NBRC 103807 / OttBd1).